The following is a 298-amino-acid chain: tRNA dimethylallyltransferase (298 aa).

10–17 is an ATP binding site; sequence GPTASGKT. 12-17 lines the substrate pocket; that stretch reads TASGKT. Residues 35 to 38 are interaction with substrate tRNA; the sequence is DSMC.

The protein belongs to the IPP transferase family. Monomer. Mg(2+) is required as a cofactor.

The catalysed reaction is adenosine(37) in tRNA + dimethylallyl diphosphate = N(6)-dimethylallyladenosine(37) in tRNA + diphosphate. In terms of biological role, catalyzes the transfer of a dimethylallyl group onto the adenine at position 37 in tRNAs that read codons beginning with uridine, leading to the formation of N6-(dimethylallyl)adenosine (i(6)A). This is tRNA dimethylallyltransferase from Hydrogenobaculum sp. (strain Y04AAS1).